We begin with the raw amino-acid sequence, 408 residues long: Peptidoglycan muramidase Tse3 (408 aa).

9 residues coordinate Ca(2+): N181, D253, Q254, E258, E375, S378, R379, D382, and N384.

As to quaternary structure, forms a heterotetramer with Tsi3 consisting of two Tse3 dimers and two Tsi3 dimers. Formation of the complex inactivates Tse3 enzymatic activity. The cofactor is Ca(2+).

It localises to the host membrane. It is found in the secreted. The enzyme catalyses Hydrolysis of (1-&gt;4)-beta-linkages between N-acetylmuramic acid and N-acetyl-D-glucosamine residues in a peptidoglycan and between N-acetyl-D-glucosamine residues in chitodextrins.. With respect to regulation, enzymatic activity depends on membrane binding. Its function is as follows. Toxin secreted by the H1 type VI (H1-T6SS) secretion system into the periplasm of recipient cells. Degrades peptidoglycan via muramidase activity thereby helping itself to compete with other bacteria. To protect itself, the bacterium synthesizes immunity protein Tsi3 that specifically interacts with and inactivates cognate toxin. The polypeptide is Peptidoglycan muramidase Tse3 (Pseudomonas aeruginosa (strain ATCC 15692 / DSM 22644 / CIP 104116 / JCM 14847 / LMG 12228 / 1C / PRS 101 / PAO1)).